The chain runs to 598 residues: MQHIRNFSIIAHIDHGKSTLADRLIHFCGGLSDREMEAQVLDSMDLERERGITIKAQTAALHYKAKDGQVYNLNLIDTPGHVDFSYEVSRSLSACEGALLVVDASQGVEAQTVANCYTAIEQNVEVVPVLNKIDLPAADPESARKEIEDVIGVDASEAVLCSAKTGLGIEDVLETVVRRVPPPKGDPDAPLKALIIDSWFDNYVGVVMLVRVVDGVLKPKDRILLMANGAQYPCDQVGVFTPRSVARPQLSAGEVGFIIAGIKELQAAKVGDTVTLAMRPASEPLPGFKEIKPQVFAGLYPVESSEYDQLRDSLEKLRLNDASLQYEPEVSQALGFGFRCGFLGLLHMDIVQERLEREFDMNLITTAPTVVYEVVMNSGEVIRVENPAKLPDQSKIAEIREPIITATIFLPQDYVGPVITLCNLKRGAQVDMRYHGRQVQLIYDLPMNEVVMDFFDKLKSVSRGYASLDYEFKEYRAADLVKLDLLVGGEKVDALSVIVHRASAQYRGREVAAKLRGLIPRQMFDVAIQSAIGSHIVARETIKALRKNVLAKCYGGDISRKKKLLEKQKEGKKRMKQVGNVEIPQEAFLAVLRVDEGK.

One can recognise a tr-type G domain in the interval Gln2–Lys184. GTP is bound by residues Asp14–Thr19 and Asn131–Asp134.

It belongs to the TRAFAC class translation factor GTPase superfamily. Classic translation factor GTPase family. LepA subfamily.

It is found in the cell inner membrane. It catalyses the reaction GTP + H2O = GDP + phosphate + H(+). Functionally, required for accurate and efficient protein synthesis under certain stress conditions. May act as a fidelity factor of the translation reaction, by catalyzing a one-codon backward translocation of tRNAs on improperly translocated ribosomes. Back-translocation proceeds from a post-translocation (POST) complex to a pre-translocation (PRE) complex, thus giving elongation factor G a second chance to translocate the tRNAs correctly. Binds to ribosomes in a GTP-dependent manner. The polypeptide is Elongation factor 4 (Aromatoleum aromaticum (strain DSM 19018 / LMG 30748 / EbN1) (Azoarcus sp. (strain EbN1))).